A 687-amino-acid chain; its full sequence is Leucine-rich repeat and fibronectin type III domain-containing protein 1-like protein (687 aa).

A signal peptide spans 1–17; that stretch reads MEWLIFSLLLLAVSASG. The LRRNT domain occupies 18–51; sequence QLCPKRCMCQNLSPSLAILCAKTGLLFVPTVIDR. Residues 18–527 lie on the Extracellular side of the membrane; the sequence is QLCPKRCMCQ…LRSHFLGGTM (510 aa). 7 LRR repeats span residues 52 to 73, 76 to 97, 100 to 121, 124 to 145, 149 to 170, 173 to 194, and 197 to 218; these read RTVE…DFAN, SLLH…TFAD, RLRA…HFRG, NLRH…AFDD, TLED…TIGR, NVNT…IFSN, and KLAR…PLFL. A glycan (N-linked (GlcNAc...) asparagine) is linked at asparagine 73. The LRRCT domain occupies 241-287; the sequence is NPLHCNCELLWLRRLTREDDLETCASPPDLTAKYFWTIPEEEFICDP. The Ig-like domain maps to 287 to 376; the sequence is PPVITRKSPK…STGTVELVVS (90 aa). Residues cysteine 309 and cysteine 358 are joined by a disulfide bond. Residues asparagine 331, asparagine 340, asparagine 346, asparagine 383, asparagine 410, and asparagine 450 are each glycosylated (N-linked (GlcNAc...) asparagine). The tract at residues 384-412 is disordered; sequence STNRIREPDPGPSDILTSAKSTSSVSNET. The span at 398–412 shows a compositional bias: polar residues; it reads ILTSAKSTSSVSNET. Residues 415-510 form the Fibronectin type-III domain; the sequence is QERKVVLAEL…VGCVTFVTET (96 aa). The chain crosses the membrane as a helical span at residues 528–548; that stretch reads IIIIGGIIVASVLVFIIILMI. The Cytoplasmic segment spans residues 549–687; sequence RYKVYSQHGA…AQRDWSDFKI (139 aa). 2 disordered regions span residues 563–601 and 630–687; these read GTAM…GSLG and EDIV…DFKI. 2 stretches are compositionally biased toward polar residues: residues 565 to 576 and 657 to 672; these read AMTNVRSQTNGG and EGTS…SPQV. The span at 673–687 shows a compositional bias: basic and acidic residues; that stretch reads SDEKKAQRDWSDFKI.

Belongs to the LRFN family.

The protein resides in the membrane. Its subcellular location is the synapse. Its function is as follows. May be involved in the regulation of excitatory synapses. The chain is Leucine-rich repeat and fibronectin type III domain-containing protein 1-like protein (lrfn1l) from Danio rerio (Zebrafish).